Here is a 300-residue protein sequence, read N- to C-terminus: MDSRVSILFVCAIAVSCFTSGSASSPVDFSVCNYEFELFRFDLEAKCPPSLYPTPPIEVDGDSLDRLMASQHGNAYMSVLFYASWCPFSRAVRPKFDMLSSMFPQIQHLAVEHSQALPSVFSRYGIHSLPSILMVNQTLNARYHGRKDLISLIEFYEEATGLQPVQYVAEGEPTGLNAGDGNLITWLRKGTSIREIFKQDPFLVLSLLFICLQMAILVFPIAESRMRALWASYVANLNLGRFGEISQLFNRGIHMVDVRRLWLKLSLVKTRNFHERAKNAQAWASSLASVSLGQTSSDQS.

The first 23 residues, Met1–Ala23, serve as a signal peptide directing secretion. The Thioredoxin domain maps to Phe41–Gly161. The N-linked (GlcNAc...) asparagine glycan is linked to Asn136. A helical transmembrane segment spans residues Phe202 to Ala222.

The protein resides in the membrane. The protein is 5'-adenylylsulfate reductase-like 5 (APRL5) of Arabidopsis thaliana (Mouse-ear cress).